The sequence spans 135 residues: Large ribosomal subunit protein uL16 (135 aa).

Belongs to the universal ribosomal protein uL16 family. Part of the 50S ribosomal subunit.

Functionally, binds 23S rRNA and is also seen to make contacts with the A and possibly P site tRNAs. The polypeptide is Large ribosomal subunit protein uL16 (Desulfatibacillum aliphaticivorans).